Reading from the N-terminus, the 416-residue chain is Thioredoxin domain-containing protein 5 homolog (416 aa).

A signal peptide spans 1 to 25 (MLTRSILSVAVCGLLLSPLLPITRA). Thioredoxin domains are found at residues 26–145 (SQEE…KELS), 150–272 (ADLG…KMVG), and 293–412 (AGEE…KFLG). Intrachain disulfides connect C65-C68, C194-C197, and C331-C334. A Prevents secretion from ER motif is present at residues 413 to 416 (HDEL).

The protein belongs to the protein disulfide isomerase family.

The protein localises to the endoplasmic reticulum. It localises to the cell surface. Its function is as follows. Possesses thioredoxin activity. Acts as a ligand for Drpr and is required for the phagocytosis of apoptotic cells. Binds to the extracellular region of Drpr and augments Drpr tyrosine phosphorylation. This is Thioredoxin domain-containing protein 5 homolog from Drosophila melanogaster (Fruit fly).